We begin with the raw amino-acid sequence, 130 residues long: Small ribosomal subunit protein uS11 (130 aa).

Belongs to the universal ribosomal protein uS11 family. As to quaternary structure, part of the 30S ribosomal subunit. Interacts with proteins S7 and S18. Binds to IF-3.

In terms of biological role, located on the platform of the 30S subunit, it bridges several disparate RNA helices of the 16S rRNA. Forms part of the Shine-Dalgarno cleft in the 70S ribosome. The protein is Small ribosomal subunit protein uS11 of Caldanaerobacter subterraneus subsp. tengcongensis (strain DSM 15242 / JCM 11007 / NBRC 100824 / MB4) (Thermoanaerobacter tengcongensis).